Reading from the N-terminus, the 85-residue chain is Putative regulatory protein THEYE_A0405 (85 aa).

Belongs to the RemA family.

The polypeptide is Putative regulatory protein THEYE_A0405 (Thermodesulfovibrio yellowstonii (strain ATCC 51303 / DSM 11347 / YP87)).